A 337-amino-acid polypeptide reads, in one-letter code: MSRINLLLLCGGGSAEHDISLMSANYFESSLAKSDQFSVLRVELDKLGQYRTAAGDECELTNNREIRFRDETKAPWPVDYVIPCIHGYPGETGDIQSYFNLIQLPYFGCESEASSNCFNKITAKMWFSALGIPNTPYIFLHQYDDEAISQAQTALANWGSIFIKAASQGSSVGCYKVDDSSKVAQVLKDAFGYAPYVVVEKTIKARELEVAVYEYNGEIVATLPGEIICDTNTFYTFDEKYAKSSKARTDVVAKDVSVELSEQIRAYAIKAFKGMKLRHLSRIDFFLTAENEILLNEINTFPGSTPISMFPKMLQNHGHDFTEYLSLVINNQLSAKD.

An ATP-grasp domain is found at 124 to 330 (KMWFSALGIP…FTEYLSLVIN (207 aa)). 154–209 (ALANWGSIFIKAASQGSSVGCYKVDDSSKVAQVLKDAFGYAPYVVVEKTIKARELE) contributes to the ATP binding site. Positions 284, 297, and 299 each coordinate Mg(2+).

It belongs to the D-alanine--D-alanine ligase family. Requires Mg(2+) as cofactor. Mn(2+) serves as cofactor.

The protein localises to the cytoplasm. The catalysed reaction is 2 D-alanine + ATP = D-alanyl-D-alanine + ADP + phosphate + H(+). The protein operates within cell wall biogenesis; peptidoglycan biosynthesis. Cell wall formation. This chain is D-alanine--D-alanine ligase, found in Shewanella sp. (strain W3-18-1).